The sequence spans 377 residues: Chaperone protein DnaJ (377 aa).

The region spanning 5 to 70 (DYYEVLGVGR…NKKAAYDQFG (66 aa)) is the J domain. The CR-type zinc finger occupies 133 to 211 (GLTKELRIPT…CHGDGRVEKT (79 aa)). Zn(2+) is bound by residues cysteine 146, cysteine 149, cysteine 163, cysteine 166, cysteine 185, cysteine 188, cysteine 199, and cysteine 202. CXXCXGXG motif repeat units lie at residues 146 to 153 (CDVCDGSG), 163 to 170 (CGTCHGQG), 185 to 192 (CPTCHGRG), and 199 to 206 (CTKCHGDG).

The protein belongs to the DnaJ family. Homodimer. Zn(2+) is required as a cofactor.

The protein localises to the cytoplasm. Its function is as follows. Participates actively in the response to hyperosmotic and heat shock by preventing the aggregation of stress-denatured proteins and by disaggregating proteins, also in an autonomous, DnaK-independent fashion. Unfolded proteins bind initially to DnaJ; upon interaction with the DnaJ-bound protein, DnaK hydrolyzes its bound ATP, resulting in the formation of a stable complex. GrpE releases ADP from DnaK; ATP binding to DnaK triggers the release of the substrate protein, thus completing the reaction cycle. Several rounds of ATP-dependent interactions between DnaJ, DnaK and GrpE are required for fully efficient folding. Also involved, together with DnaK and GrpE, in the DNA replication of plasmids through activation of initiation proteins. This is Chaperone protein DnaJ from Shewanella sp. (strain MR-4).